We begin with the raw amino-acid sequence, 265 residues long: NAD-capped RNA hydrolase NudC (265 aa).

Arg-76 serves as a coordination point for substrate. Zn(2+) is bound by residues Cys-106, Cys-109, Cys-124, and Cys-127. Tyr-132 is a substrate binding site. Positions 133–256 (PRISPAMMVL…SIAHRLIRHA (124 aa)) constitute a Nudix hydrolase domain. 3 residues coordinate a divalent metal cation: Ala-166, Glu-182, and Glu-186. Residues 167–188 (GFVEPGETLEECVHRETWEEVG) carry the Nudix box motif. Substrate is bound at residue 200–207 (QSWPFPHS). A divalent metal cation is bound at residue Glu-227. Position 249 (Ala-249) interacts with substrate.

It belongs to the Nudix hydrolase family. NudC subfamily. Homodimer. Mg(2+) is required as a cofactor. The cofactor is Mn(2+). Requires Zn(2+) as cofactor.

The enzyme catalyses a 5'-end NAD(+)-phospho-ribonucleoside in mRNA + H2O = a 5'-end phospho-adenosine-phospho-ribonucleoside in mRNA + beta-nicotinamide D-ribonucleotide + 2 H(+). It catalyses the reaction NAD(+) + H2O = beta-nicotinamide D-ribonucleotide + AMP + 2 H(+). The catalysed reaction is NADH + H2O = reduced beta-nicotinamide D-ribonucleotide + AMP + 2 H(+). Its function is as follows. mRNA decapping enzyme that specifically removes the nicotinamide adenine dinucleotide (NAD) cap from a subset of mRNAs by hydrolyzing the diphosphate linkage to produce nicotinamide mononucleotide (NMN) and 5' monophosphate mRNA. The NAD-cap is present at the 5'-end of some mRNAs and stabilizes RNA against 5'-processing. Has preference for mRNAs with a 5'-end purine. Catalyzes the hydrolysis of a broad range of dinucleotide pyrophosphates. In Chromobacterium violaceum (strain ATCC 12472 / DSM 30191 / JCM 1249 / CCUG 213 / NBRC 12614 / NCIMB 9131 / NCTC 9757 / MK), this protein is NAD-capped RNA hydrolase NudC.